Consider the following 361-residue polypeptide: Histidinol-phosphate aminotransferase (361 aa).

K219 is modified (N6-(pyridoxal phosphate)lysine).

Belongs to the class-II pyridoxal-phosphate-dependent aminotransferase family. Histidinol-phosphate aminotransferase subfamily. As to quaternary structure, homodimer. It depends on pyridoxal 5'-phosphate as a cofactor.

The catalysed reaction is L-histidinol phosphate + 2-oxoglutarate = 3-(imidazol-4-yl)-2-oxopropyl phosphate + L-glutamate. It participates in amino-acid biosynthesis; L-histidine biosynthesis; L-histidine from 5-phospho-alpha-D-ribose 1-diphosphate: step 7/9. This is Histidinol-phosphate aminotransferase from Cereibacter sphaeroides (strain ATCC 17029 / ATH 2.4.9) (Rhodobacter sphaeroides).